We begin with the raw amino-acid sequence, 325 residues long: tRNA dimethylallyltransferase (325 aa).

16 to 23 (GPTASGKT) lines the ATP pocket. Residue 18-23 (TASGKT) coordinates substrate. Interaction with substrate tRNA regions lie at residues 41-44 (DSAL), 165-169 (QRIQR), 253-258 (RCVGYR), and 286-293 (KRQITWLR).

The protein belongs to the IPP transferase family. As to quaternary structure, monomer. The cofactor is Mg(2+).

The enzyme catalyses adenosine(37) in tRNA + dimethylallyl diphosphate = N(6)-dimethylallyladenosine(37) in tRNA + diphosphate. Its function is as follows. Catalyzes the transfer of a dimethylallyl group onto the adenine at position 37 in tRNAs that read codons beginning with uridine, leading to the formation of N6-(dimethylallyl)adenosine (i(6)A). The polypeptide is tRNA dimethylallyltransferase (Ralstonia pickettii (strain 12J)).